Consider the following 585-residue polypeptide: MGAARIAPGLALLLCCPVLSSAYALVDADDVMTKEEQIFLLHRAQAQCEKRLKEVLQRPADIMESDKGWASAPTSGKPRKEKASGKLYPESGEDTGSRHQGRPCLPEWDHILCWPLGAPGEVVAMPCPDYIYDFNHKGHAYRRCDRNGSWELVPGHNRTWANYSECVKFLTNETREREVFDRLGMIYTVGYSVSLASLTVAVLILAYFRRLHCTRNYIHMHLFLSFMLRAVSIFVKDAVLYSGATLDEAERLTEEELRAIAQAPLPPVAATSYVGCRVAVTFFLYFLATNYYWILVEGLYLHSLIFMAFFSEKKYLWGFTVFGWGLPAIFVAVWVSVRATLANTGCWDLSSGNKKWIIQVPILASIVLNFILFINIVRVLATKLRETNAGRCDTRQQYRKLLKSTLVLMPLFGVHYIVFMATPYTEVSGTLWQVQMHYEMLFNSFQGFFVAIIYCFCNGEVQAEIKKSWSRWTLALDFKRKARSGSSSYSYGPMVSHTSVTNVGPRTGLGLPLSPRLLPAATTNGHPQLPCHTKPETPALQTTPPVVAAPKDDGFLNGSCSGLDEEASAPERPSVLLQEEWETVM.

Positions 1 to 26 are cleaved as a signal peptide; sequence MGAARIAPGLALLLCCPVLSSAYALV. Over 27–184 the chain is Extracellular; that stretch reads DADDVMTKEE…REREVFDRLG (158 aa). 3 disulfide bridges follow: C48–C113, C104–C144, and C127–C166. Positions 66–100 are disordered; the sequence is DKGWASAPTSGKPRKEKASGKLYPESGEDTGSRHQ. N-linked (GlcNAc...) asparagine glycosylation is found at N147, N157, N162, and N172. Residues 185-208 form a helical membrane-spanning segment; it reads MIYTVGYSVSLASLTVAVLILAYF. The Cytoplasmic segment spans residues 209–215; sequence RRLHCTR. Residues 216–235 traverse the membrane as a helical segment; that stretch reads NYIHMHLFLSFMLRAVSIFV. The Extracellular portion of the chain corresponds to 236–277; that stretch reads KDAVLYSGATLDEAERLTEEELRAIAQAPLPPVAATSYVGCR. Residues 278–301 form a helical membrane-spanning segment; it reads VAVTFFLYFLATNYYWILVEGLYL. At 302-315 the chain is on the cytoplasmic side; the sequence is HSLIFMAFFSEKKY. The chain crosses the membrane as a helical span at residues 316–337; it reads LWGFTVFGWGLPAIFVAVWVSV. Over 338 to 356 the chain is Extracellular; that stretch reads RATLANTGCWDLSSGNKKW. A helical membrane pass occupies residues 357–377; the sequence is IIQVPILASIVLNFILFINIV. Over 378 to 404 the chain is Cytoplasmic; sequence RVLATKLRETNAGRCDTRQQYRKLLKS. The chain crosses the membrane as a helical span at residues 405 to 423; the sequence is TLVLMPLFGVHYIVFMATP. Residues 424-435 lie on the Extracellular side of the membrane; that stretch reads YTEVSGTLWQVQ. Residues 436–458 form a helical membrane-spanning segment; that stretch reads MHYEMLFNSFQGFFVAIIYCFCN. The Cytoplasmic portion of the chain corresponds to 459–585; sequence GEVQAEIKKS…LLQEEWETVM (127 aa). Positions 469-472 match the Important for interaction with G proteins motif; it reads WSRW. Position 543 is a phosphothreonine (T543).

This sequence belongs to the G-protein coupled receptor 2 family. As to quaternary structure, homodimer in the absence of bound ligand. Peptide hormone binding leads to dissociation of the homodimer. Post-translationally, N-glycosylated.

It localises to the cell membrane. In terms of biological role, G-protein-coupled receptor for parathyroid hormone (PTH) and for parathyroid hormone-related peptide (PTHLH). Ligand binding causes a conformation change that triggers signaling via guanine nucleotide-binding proteins (G proteins) and modulates the activity of downstream effectors, such as adenylate cyclase (cAMP). PTH1R is coupled to G(s) G alpha proteins and mediates activation of adenylate cyclase activity. PTHLH dissociates from PTH1R more rapidly than PTH; as consequence, the cAMP response induced by PTHLH decays faster than the response induced by PTH. In Sus scrofa (Pig), this protein is Parathyroid hormone/parathyroid hormone-related peptide receptor (PTH1R).